We begin with the raw amino-acid sequence, 391 residues long: Na(+)/H(+) antiporter NhaA 1 (391 aa).

The next 11 helical transmembrane spans lie at A25–L45, V56–L76, A98–I118, G128–G148, V157–F177, A180–M200, L208–H228, V264–I284, V297–I317, G335–F355, and E364–L384.

The protein belongs to the NhaA Na(+)/H(+) (TC 2.A.33) antiporter family.

It is found in the cell inner membrane. It catalyses the reaction Na(+)(in) + 2 H(+)(out) = Na(+)(out) + 2 H(+)(in). Functionally, na(+)/H(+) antiporter that extrudes sodium in exchange for external protons. In Pseudomonas syringae pv. syringae (strain B728a), this protein is Na(+)/H(+) antiporter NhaA 1.